Here is a 185-residue protein sequence, read N- to C-terminus: Large ribosomal subunit protein bL17 (185 aa).

Belongs to the bacterial ribosomal protein bL17 family. Part of the 50S ribosomal subunit. Contacts protein L32.

In Rhodococcus erythropolis (strain PR4 / NBRC 100887), this protein is Large ribosomal subunit protein bL17.